Reading from the N-terminus, the 254-residue chain is 3-deoxy-manno-octulosonate cytidylyltransferase (254 aa).

Belongs to the KdsB family.

It is found in the cytoplasm. It catalyses the reaction 3-deoxy-alpha-D-manno-oct-2-ulosonate + CTP = CMP-3-deoxy-beta-D-manno-octulosonate + diphosphate. The protein operates within nucleotide-sugar biosynthesis; CMP-3-deoxy-D-manno-octulosonate biosynthesis; CMP-3-deoxy-D-manno-octulosonate from 3-deoxy-D-manno-octulosonate and CTP: step 1/1. Its pathway is bacterial outer membrane biogenesis; lipopolysaccharide biosynthesis. Its function is as follows. Activates KDO (a required 8-carbon sugar) for incorporation into bacterial lipopolysaccharide in Gram-negative bacteria. This chain is 3-deoxy-manno-octulosonate cytidylyltransferase, found in Chlamydia caviae (strain ATCC VR-813 / DSM 19441 / 03DC25 / GPIC) (Chlamydophila caviae).